Here is a 516-residue protein sequence, read N- to C-terminus: Protein BTN1 (516 aa).

8 helical membrane-spanning segments follow: residues 24–44 (LFAA…IILS), 57–77 (GVVA…WPLL), 88–108 (VGFC…SSSL), 112–132 (LLGI…FLQL), 146–166 (LGAW…IWWL), 169–189 (GLGV…FPIT), 371–391 (PAII…TFFF), and 409–429 (SITI…SGYV).

It belongs to the battenin family.

The protein resides in the vacuole membrane. Its function is as follows. Involved in vacuolar transport and vacuole pH homeostasis. Also required for cytokinesis. The chain is Protein BTN1 (BTN1) from Cryptococcus neoformans var. neoformans serotype D (strain JEC21 / ATCC MYA-565) (Filobasidiella neoformans).